Reading from the N-terminus, the 397-residue chain is Protein ROH1D (397 aa).

Residues 247–267 (LIVPVYTMTTVLLFVMWALVA) traverse the membrane as a helical segment.

Belongs to the ROH1 family. As to quaternary structure, interacts with EXO70C2. In terms of tissue distribution, mostly expressed in mature pollen.

The protein resides in the membrane. It is found in the cytoplasm. It localises to the cytosol. In terms of biological role, involved in the regulation of plant growth, and modulates pollen development to ensure male fertility. May also affect the composition of the inner seed coat mucilage layer. This chain is Protein ROH1D, found in Arabidopsis thaliana (Mouse-ear cress).